The sequence spans 460 residues: MLTIYNTLSKTKEVFKPLDGNKVRMYVCGMTVYDYCHLGHGRSMVAFDLVTRWLRKSGYELTYVRNITDIDDKIINRANENGETFDALTARMIDAMHEDERRLNILPPDQEPRATDHIAGMHAMIQTLIDKGYAYAPGNGDVYYRVGKFVGYGKLSRKRIEDLRIGARIEVDEAKQDPLDFVLWKGVKPGEPSWESPWGPGRPGWHIECSVMSTCCLGESFDIHGGGSDLEFPHHENEIAQSEAATGKQYANAWMHCGMIRINGEKMSKSLNNFFTIRDVLEKYHPEVVRYLLVASHYRSAINYSEDSLRDAKGALERFYHALRGLPRVAAKGGEAFVERFSVAMNDDFGTPEACAVLFDLVREINRLRDSDVEAAAGLAGRLRELGDVLGVLQLEADDFLRAGAEGKVDAAEVEGLIQARLKARADKNWAESDRIRDQLTAMGVVLEDSKGTTTWRLAD.

Residue C28 coordinates Zn(2+). A 'HIGH' region motif is present at residues M30–H40. Zn(2+)-binding residues include C209, H234, and E238. Residues K266–S270 carry the 'KMSKS' region motif. K269 contributes to the ATP binding site.

It belongs to the class-I aminoacyl-tRNA synthetase family. In terms of assembly, monomer. The cofactor is Zn(2+).

It is found in the cytoplasm. It carries out the reaction tRNA(Cys) + L-cysteine + ATP = L-cysteinyl-tRNA(Cys) + AMP + diphosphate. This Pseudomonas putida (strain ATCC 47054 / DSM 6125 / CFBP 8728 / NCIMB 11950 / KT2440) protein is Cysteine--tRNA ligase.